Consider the following 29-residue polypeptide: Cyclotide mden-A (29 aa).

A cross-link (cyclopeptide (Gly-Asn)) is located at residues Gly1–Asn29. 3 disulfide bridges follow: Cys5/Cys19, Cys9/Cys21, and Cys14/Cys26.

It belongs to the cyclotide family. Moebius subfamily. Post-translationally, this is a cyclic peptide.

Its function is as follows. Probably participates in a plant defense mechanism. The polypeptide is Cyclotide mden-A (Melicytus dentatus (Tree violet)).